The primary structure comprises 438 residues: Argininosuccinate lyase (438 aa).

The protein belongs to the lyase 1 family. Argininosuccinate lyase subfamily.

Its subcellular location is the cytoplasm. The catalysed reaction is 2-(N(omega)-L-arginino)succinate = fumarate + L-arginine. It participates in amino-acid biosynthesis; L-arginine biosynthesis; L-arginine from L-ornithine and carbamoyl phosphate: step 3/3. This chain is Argininosuccinate lyase, found in Clostridium tetani (strain Massachusetts / E88).